Consider the following 285-residue polypeptide: Ribosomal RNA small subunit methyltransferase H (285 aa).

Residues 34–36, Asp51, Phe75, Asp96, and His103 each bind S-adenosyl-L-methionine; that span reads AGH. Positions 258–285 are disordered; it reads PLVPSEKEAAQNPRARSAKLRAAEKEAP.

This sequence belongs to the methyltransferase superfamily. RsmH family.

The protein resides in the cytoplasm. It catalyses the reaction cytidine(1402) in 16S rRNA + S-adenosyl-L-methionine = N(4)-methylcytidine(1402) in 16S rRNA + S-adenosyl-L-homocysteine + H(+). Functionally, specifically methylates the N4 position of cytidine in position 1402 (C1402) of 16S rRNA. The protein is Ribosomal RNA small subunit methyltransferase H of Thermus thermophilus (strain ATCC BAA-163 / DSM 7039 / HB27).